The sequence spans 367 residues: mRNA-decapping enzyme-like protein (367 aa).

3 disordered regions span residues 144-179, 196-246, and 299-333; these read PKAS…RDAP, NTAS…SSSP, and PNNA…PTGP. The segment covering 196 to 211 has biased composition (polar residues); sequence NTASGSASGPYQSSAI. Over residues 212–234 the composition is skewed to low complexity; the sequence is PHQPHQPHQPTIAPPVAAAAPPQ. The span at 299-309 shows a compositional bias: polar residues; the sequence is PNNASHQQRSY. Residues 315–331 show a composition bias toward pro residues; that stretch reads QPFPPPTPPPSLAPAPT.

This sequence belongs to the DCP1 family. As to quaternary structure, homodimer. Component of the decapping complex. Interacts with DCP2 and DCP5. Interacts with BCHA1. As to expression, expressed in seedlings, mostly in root tips, root hairs, and the vascular system. Also present in roots, leaves, stems, and flowers.

The protein resides in the cytoplasm. It localises to the P-body. In terms of biological role, as a component of the decapping complex, involved in the degradation of mRNAs. Essential for postembryonic development. This chain is mRNA-decapping enzyme-like protein, found in Arabidopsis thaliana (Mouse-ear cress).